We begin with the raw amino-acid sequence, 115 residues long: NADH-ubiquinone oxidoreductase chain 3 (115 aa).

The next 3 membrane-spanning stretches (helical) occupy residues 5–25, 55–75, and 86–106; these read TALLVNITLSMLLIIVAFWFF, FFLVAITFLLFDLEIALLLPL, and IMMLTAFILISVLALGLAYEW.

This sequence belongs to the complex I subunit 3 family. As to quaternary structure, core subunit of respiratory chain NADH dehydrogenase (Complex I) which is composed of 45 different subunits. Interacts with TMEM186. Interacts with TMEM242.

It is found in the mitochondrion inner membrane. It catalyses the reaction a ubiquinone + NADH + 5 H(+)(in) = a ubiquinol + NAD(+) + 4 H(+)(out). In terms of biological role, core subunit of the mitochondrial membrane respiratory chain NADH dehydrogenase (Complex I) which catalyzes electron transfer from NADH through the respiratory chain, using ubiquinone as an electron acceptor. Essential for the catalytic activity of complex I. This Peromyscus sejugis (Santa Cruz mouse) protein is NADH-ubiquinone oxidoreductase chain 3.